A 239-amino-acid chain; its full sequence is tRNA (guanine-N(7)-)-methyltransferase (239 aa).

S-adenosyl-L-methionine-binding residues include glutamate 68, glutamate 93, aspartate 120, and aspartate 143. The active site involves aspartate 143. Substrate contacts are provided by residues lysine 147, aspartate 180, and 217 to 220 (TKFE).

Belongs to the class I-like SAM-binding methyltransferase superfamily. TrmB family.

The enzyme catalyses guanosine(46) in tRNA + S-adenosyl-L-methionine = N(7)-methylguanosine(46) in tRNA + S-adenosyl-L-homocysteine. The protein operates within tRNA modification; N(7)-methylguanine-tRNA biosynthesis. Functionally, catalyzes the formation of N(7)-methylguanine at position 46 (m7G46) in tRNA. This chain is tRNA (guanine-N(7)-)-methyltransferase, found in Vibrio vulnificus (strain CMCP6).